The primary structure comprises 193 residues: dCTP deaminase (193 aa).

DCTP contacts are provided by residues 110-115 (RSSLAR), Asp-128, 136-138 (VLE), Tyr-171, Lys-178, and Gln-182. Glu-138 serves as the catalytic Proton donor/acceptor.

This sequence belongs to the dCTP deaminase family. As to quaternary structure, homotrimer.

It carries out the reaction dCTP + H2O + H(+) = dUTP + NH4(+). Its pathway is pyrimidine metabolism; dUMP biosynthesis; dUMP from dCTP (dUTP route): step 1/2. Catalyzes the deamination of dCTP to dUTP. The protein is dCTP deaminase of Buchnera aphidicola subsp. Acyrthosiphon pisum (strain APS) (Acyrthosiphon pisum symbiotic bacterium).